We begin with the raw amino-acid sequence, 73 residues long: Large ribosomal subunit protein bL31 (73 aa).

Belongs to the bacterial ribosomal protein bL31 family. Type A subfamily. In terms of assembly, part of the 50S ribosomal subunit.

Its function is as follows. Binds the 23S rRNA. In Rhizobium meliloti (strain 1021) (Ensifer meliloti), this protein is Large ribosomal subunit protein bL31.